A 258-amino-acid chain; its full sequence is Pyridoxal phosphate homeostasis protein (258 aa).

Residue lysine 47 is modified to N6-(pyridoxal phosphate)lysine.

It belongs to the pyridoxal phosphate-binding protein YggS/PROSC family.

Pyridoxal 5'-phosphate (PLP)-binding protein, which is involved in PLP homeostasis. This is Pyridoxal phosphate homeostasis protein from Mycobacterium bovis (strain ATCC BAA-935 / AF2122/97).